Consider the following 248-residue polypeptide: MAGHSKWANIKHKKAKEDAKRGKIFTKLIREITVAARLGGGDKDANPRLRAAIATAFANNMSKDTVERAILKGAGGDDSANVEEVRYEGYGPGGVAIIVDCMTDNRNRTVGEVRHAFTKSGGNLGTDGSVAYMFTKKGIISFAPGVDEDALMEVALEAGAEDIITHEDGSIDVFTTPHDFSDVQEALIAKGFNSDNAEVTFDAETKAELDIEIAEKVMNLIDRLEDLDDVQNVYSNVNFTQELMEQLG.

It belongs to the TACO1 family.

It localises to the cytoplasm. The chain is Probable transcriptional regulatory protein Fphi_1565 from Francisella philomiragia subsp. philomiragia (strain ATCC 25017 / CCUG 19701 / FSC 153 / O#319-036).